Reading from the N-terminus, the 259-residue chain is Flagellar brake protein YcgR (259 aa).

The 118-residue stretch at 129 to 246 folds into the PilZ domain; the sequence is QRREFYRLQT…DNAIQRYIFK (118 aa).

The protein belongs to the YcgR family. In terms of assembly, monomer. Interacts with the flagellar basal bodies.

It localises to the bacterial flagellum basal body. Its function is as follows. Acts as a flagellar brake, regulating swimming and swarming in a bis-(3'-5') cyclic diguanylic acid (c-di-GMP)-dependent manner. Binds 1 c-di-GMP dimer per subunit. Increasing levels of c-di-GMP lead to decreased motility. This is Flagellar brake protein YcgR from Azoarcus sp. (strain BH72).